The sequence spans 170 residues: Urease accessory protein UreE (170 aa).

This sequence belongs to the UreE family.

The protein resides in the cytoplasm. In terms of biological role, involved in urease metallocenter assembly. Binds nickel. Probably functions as a nickel donor during metallocenter assembly. The protein is Urease accessory protein UreE of Helicobacter pylori (strain J99 / ATCC 700824) (Campylobacter pylori J99).